Here is an 86-residue protein sequence, read N- to C-terminus: UPF0180 protein CA_C1486 (86 aa).

This sequence belongs to the UPF0180 family.

This chain is UPF0180 protein CA_C1486, found in Clostridium acetobutylicum (strain ATCC 824 / DSM 792 / JCM 1419 / IAM 19013 / LMG 5710 / NBRC 13948 / NRRL B-527 / VKM B-1787 / 2291 / W).